A 450-amino-acid polypeptide reads, in one-letter code: Beclin-1 (450 aa).

An N-acetylmethionine modification is found at Met-1. Phosphoserine occurs at positions 15 and 30. Residues 48–72 are disordered; sequence TTAQAKPGETQEEETNSGEEPFIET. Ser-90, Ser-93, and Ser-96 each carry phosphoserine; by AMPK. The short motif at 108 to 127 is the BH3 element; it reads TMENLSRRLKVTGDLFDIMS. The tract at residues 112-159 is interaction with BCL2 and BCL2L1 isoform Bcl-X(L); the sequence is LSRRLKVTGDLFDIMSGQTDVDHPLCEECTDTLLDQLDTQLNVTENEC. Thr-119 carries the post-translational modification Phosphothreonine; by DAPK1. The stretch at 142–270 forms a coiled coil; it reads DTLLDQLDTQ…LDKLKKTNVF (129 aa). Residues 245-450 are evolutionary conserved domain (ECD); sequence DELKSVENQM…AWVSSQFYNK (206 aa). Glycyl lysine isopeptide (Lys-Gly) (interchain with G-Cter in ubiquitin) cross-links involve residues Lys-402 and Lys-437. The required for membrane-association stretch occupies residues 425–450; it reads WTKALKFMLTNLKWGLAWVSSQFYNK.

It belongs to the beclin family. A homodimeric form is proposed to exist; this metastable form readily transits to ATG14- or UVRAG-containing complexes with BECN1:UVRAG being more stable than BECN1:ATG14. Component of the PI3K (PI3KC3/PI3K-III/class III phosphatidylinositol 3-kinase) complex the core of which is composed of the catalytic subunit PIK3C3, the regulatory subunit PIK3R4 and BECN1 associating with additional regulatory/auxiliary subunits to form alternative complex forms. Alternative complex forms containing a fourth regulatory subunit in a mutually exclusive manner are PI3K complex I (PI3KC3-C1) containing ATG14, and PI3K complex II (PI3KC3-C2) containing UVRAG. PI3KC3-C1 displays a V-shaped architecture with PIK3R4 serving as a bridge between PIK3C3 and the ATG14:BECN1 subcomplex. Both, PI3KC3-C1 and PI3KC3-C2, can associate with further regulatory subunits, such as RUBCN, SH3GLB1/Bif-1 and AMBRA1. PI3KC3-C1 probably associates with PIK3CB. Forms a complex with PPP2CA and AMBRA1; AMBRA1 and BECN1 components of the complex regulate MYC stability via different pathways. Component of the complex, at least composed of LRPPRC, BECN1 and BCL2; the interactions prevent BECN1 from forming an autophagy-inducing complex with PIK3C3. Interacts with AMBRA1, GOPC, GRID2. Interacts with BCL2 and BCL2L1 isoform Bcl-X(L); the interaction inhibits BECN1 function in promoting autophagy by interfering with the formation of the PI3K complex. Interacts with cytosolic HMGB1; inhibits the interaction of BECN1 and BCL2 leading to promotion of autophagy. Interacts with USP10, USP13, VMP1, DAPK1, RAB39A. Interacts with the poly-Gln domain of ATXN3; the interaction causes deubiquitination at Lys-402 and stabilizes BECN1. Interacts with SLAMF1. Interacts with TRIM5; the interaction causes activation of BECN1 by causing its dissociation from its inhibitors BCL2 and TAB2. Interacts with active ULK1 (phosphorylated on 'Ser-317') and MEFV simultaneously. Interacts with WDR81 and WDR91; negatively regulates the PI3 kinase/PI3K activity associated with endosomal membranes. Interacts with LAPTM4B; competes with EGFR for LAPTM4B binding; regulates EGFR activity. Interacts with TRIM50. Interacts with TRIM16. Interacts with ATG14; this interaction is increased in the absence of TMEM39A. Interacts with WASHC1; preventing interaction with AMBRA1 and the DCX(AMBRA1) complex and subsequent ubiquitination. Interacts with TRIM17. Interacts with BCL2L10/BCL-B (via BH1 domain). Interacts with SH3BGRL. Interacts with IRGM; enhancing BECN1-interacting partners and influencing the composition of the BECN1 complex. Interacts with ARMC3. Interacts with LRPPRC. As to quaternary structure, (Microbial infection) Interacts with human cytomegalovirus/HHV-5 protein TRS1. In terms of assembly, (Microbial infection) Interacts with murine gammaherpesvirus 68 M11. (Microbial infection) Interacts with herpes simplex virus 1 (HHV-1) protein ICP34.5; this interaction antagonizes the host autophagy response. As to quaternary structure, (Microbial infection) Interacts with Epstein-Barr virus protein BHRF1; this interaction inhibits BECN1-mediated autophagy induction. In terms of processing, phosphorylation at Thr-119 by DAPK1 reduces its interaction with BCL2 and BCL2L1 and promotes induction of autophagy. In response to autophagic stimuli, phosphorylated at serine residues by AMPK in an ATG14-dependent manner, and this phosphorylation is critical for maximally efficient autophagy. Post-translationally, polyubiquitinated by NEDD4, both with 'Lys-11'- and 'Lys-63'-linkages. 'Lys-11'-linked polyubiquitination leads to degradation and is enhanced when the stabilizing interaction partner VPS34 is depleted. Deubiquitinated by USP10 and USP13, leading to stabilize the PIK3C3/VPS34-containing complexes. Polyubiquitinated at Lys-402 with 'Lys-48'-linkages. 'Lys-48'-linked polyubiquitination of Lys-402 leads to degradation. Deubiquitinated by ATXN3, leading to stabilization. Ubiquitinated at Lys-437 via 'Lys-63'-linkage by the DCX(AMBRA1) complex, thereby increasing the association between BECN1 and PIK3C3 to promote PIK3C3 activity. 'Lys-48'-linked ubiquitination by RNF216 leads to proteasomal degradation and autophagy inhibition. Proteolytically processed by caspases including CASP8 and CASP3; the C-terminal fragments lack autophagy-inducing capacity and are proposed to induce apoptosis. Thus the cleavage is proposed to be an determinant to switch from autophagy to apoptosis pathways affecting cellular homeostasis including viral infections and survival of tumor cells. Ubiquitous.

The protein resides in the cytoplasm. Its subcellular location is the golgi apparatus. It is found in the trans-Golgi network membrane. It localises to the endosome membrane. The protein localises to the endoplasmic reticulum membrane. The protein resides in the mitochondrion membrane. Its subcellular location is the endosome. It is found in the cytoplasmic vesicle. It localises to the autophagosome. The protein localises to the mitochondrion. The protein resides in the nucleus. In terms of biological role, plays a central role in autophagy. Acts as a core subunit of the PI3K complex that mediates formation of phosphatidylinositol 3-phosphate; different complex forms are believed to play a role in multiple membrane trafficking pathways: PI3KC3-C1 is involved in initiation of autophagosomes and PI3KC3-C2 in maturation of autophagosomes and endocytosis. Involved in regulation of degradative endocytic trafficking and required for the abscission step in cytokinesis, probably in the context of PI3KC3-C2. Essential for the formation of PI3KC3-C2 but not PI3KC3-C1 PI3K complex forms. Involved in endocytosis. May play a role in antiviral host defense. Its function is as follows. Beclin-1-C 35 kDa localized to mitochondria can promote apoptosis; it induces the mitochondrial translocation of BAX and the release of proapoptotic factors. (Microbial infection) Protects against infection by a neurovirulent strain of Sindbis virus. The sequence is that of Beclin-1 (BECN1) from Homo sapiens (Human).